The following is a 78-amino-acid chain: MDFKQEVLDVLAEVCQDDIVKENPDIEIFEEGLLDSFGTVELLLAIENRFDILVPITEFDRDVWNTPNNIVNQLSELK.

The Carrier domain occupies 1–78 (MDFKQEVLDV…NIVNQLSELK (78 aa)). An O-(pantetheine 4'-phosphoryl)serine modification is found at Ser36.

It belongs to the DltC family. In terms of processing, 4'-phosphopantetheine is transferred from CoA to a specific serine of apo-DCP.

It localises to the cytoplasm. Its pathway is cell wall biogenesis; lipoteichoic acid biosynthesis. Carrier protein involved in the D-alanylation of lipoteichoic acid (LTA). The loading of thioester-linked D-alanine onto DltC is catalyzed by D-alanine--D-alanyl carrier protein ligase DltA. The DltC-carried D-alanyl group is further transferred to cell membrane phosphatidylglycerol (PG) by forming an ester bond, probably catalyzed by DltD. D-alanylation of LTA plays an important role in modulating the properties of the cell wall in Gram-positive bacteria, influencing the net charge of the cell wall. This chain is D-alanyl carrier protein, found in Bacillus subtilis (strain 168).